A 253-amino-acid polypeptide reads, in one-letter code: Small ribosomal subunit protein eS6 (253 aa).

Residues 200-253 (KKRLAKRKQSENDYAKLLAQRKKESKVRRQEELKRRRSASMRDSKSSDKSAPQK) form a disordered region. Residues 226 to 247 (VRRQEELKRRRSASMRDSKSSD) are compositionally biased toward basic and acidic residues.

The protein belongs to the eukaryotic ribosomal protein eS6 family. As to quaternary structure, component of the small ribosomal subunit. Part of the small subunit (SSU) processome, composed of more than 70 proteins and the RNA chaperone small nucleolar RNA (snoRNA) U3. Post-translationally, ribosomal protein S6 is the major substrate of protein kinases in eukaryote ribosomes.

Its subcellular location is the cytoplasm. The protein localises to the nucleus. It localises to the nucleolus. In terms of biological role, component of the 40S small ribosomal subunit. Plays an important role in controlling cell growth and proliferation through the selective translation of particular classes of mRNA. Part of the small subunit (SSU) processome, first precursor of the small eukaryotic ribosomal subunit. During the assembly of the SSU processome in the nucleolus, many ribosome biogenesis factors, an RNA chaperone and ribosomal proteins associate with the nascent pre-rRNA and work in concert to generate RNA folding, modifications, rearrangements and cleavage as well as targeted degradation of pre-ribosomal RNA by the RNA exosome. The polypeptide is Small ribosomal subunit protein eS6 (RpS6) (Spodoptera frugiperda (Fall armyworm)).